The chain runs to 490 residues: Betaine aldehyde dehydrogenase (490 aa).

The K(+) site is built by Thr-26, Ile-27, and Asp-93. 150-152 (GAW) is an NAD(+) binding site. Lys-162 (charge relay system) is an active-site residue. 176–179 (KPSE) is an NAD(+) binding site. Val-180 is a K(+) binding site. Residue 230-233 (GVAS) participates in NAD(+) binding. Position 246 (Leu-246) interacts with K(+). The Proton acceptor role is filled by Glu-252. NAD(+) contacts are provided by Gly-254, Cys-286, and Glu-387. The active-site Nucleophile is the Cys-286. Cys-286 carries the post-translational modification Cysteine sulfenic acid (-SOH). The K(+) site is built by Lys-457 and Gly-460. The active-site Charge relay system is the Glu-464.

The protein belongs to the aldehyde dehydrogenase family. As to quaternary structure, dimer of dimers. It depends on K(+) as a cofactor.

It catalyses the reaction betaine aldehyde + NAD(+) + H2O = glycine betaine + NADH + 2 H(+). It functions in the pathway amine and polyamine biosynthesis; betaine biosynthesis via choline pathway; betaine from betaine aldehyde: step 1/1. Its function is as follows. Involved in the biosynthesis of the osmoprotectant glycine betaine. Catalyzes the irreversible oxidation of betaine aldehyde to the corresponding acid. The chain is Betaine aldehyde dehydrogenase from Escherichia coli O9:H4 (strain HS).